The chain runs to 159 residues: Dihydrofolate reductase (159 aa).

One can recognise a DHFR domain in the interval 1 to 158 (MISLIAALAV…HSYCFEILER (158 aa)). A substrate-binding site is contributed by Ile5. NADP(+) is bound by residues Ala7 and 13-19 (VIGMENA). Asp27 is a substrate binding site. 45–46 (LT) contributes to the NADP(+) binding site. The substrate site is built by Arg52 and Arg57. NADP(+)-binding positions include 63–64 (SS), Lys76, and 95–102 (GGGRVYEQ). Substrate is bound at residue Thr113.

It belongs to the dihydrofolate reductase family.

It carries out the reaction (6S)-5,6,7,8-tetrahydrofolate + NADP(+) = 7,8-dihydrofolate + NADPH + H(+). Its pathway is cofactor biosynthesis; tetrahydrofolate biosynthesis; 5,6,7,8-tetrahydrofolate from 7,8-dihydrofolate: step 1/1. Functionally, key enzyme in folate metabolism. Catalyzes an essential reaction for de novo glycine and purine synthesis, and for DNA precursor synthesis. This chain is Dihydrofolate reductase (folA), found in Klebsiella aerogenes (Enterobacter aerogenes).